The following is a 442-amino-acid chain: Histidinol dehydrogenase (442 aa).

The NAD(+) site is built by Tyr132, Gln194, and Asn217. Residues Ser243, Gln265, and His268 each coordinate substrate. Gln265 and His268 together coordinate Zn(2+). Catalysis depends on proton acceptor residues Glu332 and His333. Substrate contacts are provided by His333, Asp366, Glu420, and His425. Zn(2+) is bound at residue Asp366. His425 contributes to the Zn(2+) binding site.

This sequence belongs to the histidinol dehydrogenase family. Zn(2+) serves as cofactor.

It catalyses the reaction L-histidinol + 2 NAD(+) + H2O = L-histidine + 2 NADH + 3 H(+). It participates in amino-acid biosynthesis; L-histidine biosynthesis; L-histidine from 5-phospho-alpha-D-ribose 1-diphosphate: step 9/9. Functionally, catalyzes the sequential NAD-dependent oxidations of L-histidinol to L-histidinaldehyde and then to L-histidine. The polypeptide is Histidinol dehydrogenase (Idiomarina loihiensis (strain ATCC BAA-735 / DSM 15497 / L2-TR)).